Reading from the N-terminus, the 430-residue chain is Serine--tRNA ligase (430 aa).

Residues 41–60 are disordered; the sequence is QSRTQDLQNERNVRSKSIGK. 236–238 is an L-serine binding site; it reads TAE. 267–269 is an ATP binding site; sequence RSE. L-serine is bound at residue Glu-290. 354–357 contacts ATP; the sequence is EISS. Residue Ser-390 coordinates L-serine.

Belongs to the class-II aminoacyl-tRNA synthetase family. Type-1 seryl-tRNA synthetase subfamily. Homodimer. The tRNA molecule binds across the dimer.

Its subcellular location is the cytoplasm. The enzyme catalyses tRNA(Ser) + L-serine + ATP = L-seryl-tRNA(Ser) + AMP + diphosphate + H(+). The catalysed reaction is tRNA(Sec) + L-serine + ATP = L-seryl-tRNA(Sec) + AMP + diphosphate + H(+). It participates in aminoacyl-tRNA biosynthesis; selenocysteinyl-tRNA(Sec) biosynthesis; L-seryl-tRNA(Sec) from L-serine and tRNA(Sec): step 1/1. Functionally, catalyzes the attachment of serine to tRNA(Ser). Is also able to aminoacylate tRNA(Sec) with serine, to form the misacylated tRNA L-seryl-tRNA(Sec), which will be further converted into selenocysteinyl-tRNA(Sec). The sequence is that of Serine--tRNA ligase from Alteromonas mediterranea (strain DSM 17117 / CIP 110805 / LMG 28347 / Deep ecotype).